We begin with the raw amino-acid sequence, 141 residues long: Cystatin (141 aa).

Positions 1–26 are cleaved as a signal peptide; it reads MVHSQLPVAAPLRLLCALLLLPSATM. In terms of domain architecture, Cystatin spans 29–129; that stretch reads GGISPRSVTD…CHFQVWSRPW (101 aa). A Secondary area of contact motif is present at residues 73–77; sequence QVVAG. 2 disulfides stabilise this stretch: Cys91–Cys107 and Cys120–Cys140.

It belongs to the cystatin family. As to expression, expressed by the venom gland at an extremely low level (at protein level).

Its subcellular location is the secreted. Inhibits various C1 cysteine proteases including cathepsin L, papain and cathepsin B. This protein has no toxic activity and its function in the venom is unknown. It may play a role as a housekeeping or regulatory protein. In Oxyuranus microlepidotus (Inland taipan), this protein is Cystatin.